The sequence spans 316 residues: MTPTNQIHNALYLPFQREQWAELRESVPLTLSENDLADLRGINEKISLSEVTDIYLPLSRLLNLNVGAKQQRGLALNEFLGRVPPKRPYIISIAGSVAVGKSTTARILQALLSHWPEHPKVDLITTDGFLHPLAELKRRGLMQRKGFPESYDMKGLVDFISAIKAGEAAVSAPIYSHITYDRVPDQFQWIRQPDILIIEGLNVLQTGQDSAVDTKRPFVSDFVDFSIYVDAEEELLKKWYIERFLQFRTGAFSEESSYFHHYSQLTDHEATGIASKIWDSINGPNLTLNIQPTRERAHLILQKGQDHLMDQVLLRK.

95–102 (GSVAVGKS) is a binding site for ATP.

The protein belongs to the prokaryotic pantothenate kinase family.

Its subcellular location is the cytoplasm. The enzyme catalyses (R)-pantothenate + ATP = (R)-4'-phosphopantothenate + ADP + H(+). It functions in the pathway cofactor biosynthesis; coenzyme A biosynthesis; CoA from (R)-pantothenate: step 1/5. This Shewanella piezotolerans (strain WP3 / JCM 13877) protein is Pantothenate kinase.